A 395-amino-acid polypeptide reads, in one-letter code: NAD(P)H-quinone oxidoreductase subunit H (395 aa).

This sequence belongs to the complex I 49 kDa subunit family. NDH-1 can be composed of about 15 different subunits; different subcomplexes with different compositions have been identified which probably have different functions.

It is found in the cellular thylakoid membrane. The catalysed reaction is a plastoquinone + NADH + (n+1) H(+)(in) = a plastoquinol + NAD(+) + n H(+)(out). It catalyses the reaction a plastoquinone + NADPH + (n+1) H(+)(in) = a plastoquinol + NADP(+) + n H(+)(out). Its function is as follows. NDH-1 shuttles electrons from an unknown electron donor, via FMN and iron-sulfur (Fe-S) centers, to quinones in the respiratory and/or the photosynthetic chain. The immediate electron acceptor for the enzyme in this species is believed to be plastoquinone. Couples the redox reaction to proton translocation, and thus conserves the redox energy in a proton gradient. Cyanobacterial NDH-1 also plays a role in inorganic carbon-concentration. The protein is NAD(P)H-quinone oxidoreductase subunit H of Prochlorococcus marinus subsp. pastoris (strain CCMP1986 / NIES-2087 / MED4).